Reading from the N-terminus, the 475-residue chain is Ribulose bisphosphate carboxylase large chain (475 aa).

The propeptide occupies 1 to 2 (MS). Residue Pro3 is modified to N-acetylproline. Position 14 is an N6,N6,N6-trimethyllysine (Lys14). The substrate site is built by Asn123 and Thr173. The active-site Proton acceptor is the Lys175. Lys177 is a binding site for substrate. Residues Lys201, Asp203, and Glu204 each coordinate Mg(2+). The residue at position 201 (Lys201) is an N6-carboxylysine. His294 (proton acceptor) is an active-site residue. Substrate-binding residues include Arg295, His327, and Ser379.

The protein belongs to the RuBisCO large chain family. Type I subfamily. In terms of assembly, heterohexadecamer of 8 large chains and 8 small chains; disulfide-linked. The disulfide link is formed within the large subunit homodimers. Requires Mg(2+) as cofactor. The disulfide bond which can form in the large chain dimeric partners within the hexadecamer appears to be associated with oxidative stress and protein turnover.

The protein resides in the plastid. It is found in the chloroplast. It catalyses the reaction 2 (2R)-3-phosphoglycerate + 2 H(+) = D-ribulose 1,5-bisphosphate + CO2 + H2O. It carries out the reaction D-ribulose 1,5-bisphosphate + O2 = 2-phosphoglycolate + (2R)-3-phosphoglycerate + 2 H(+). In terms of biological role, ruBisCO catalyzes two reactions: the carboxylation of D-ribulose 1,5-bisphosphate, the primary event in carbon dioxide fixation, as well as the oxidative fragmentation of the pentose substrate in the photorespiration process. Both reactions occur simultaneously and in competition at the same active site. In Angiopteris lygodiifolia (Turnip fern), this protein is Ribulose bisphosphate carboxylase large chain.